The sequence spans 1131 residues: DNA polymerase II large subunit (1131 aa).

The protein belongs to the archaeal DNA polymerase II family. Heterodimer of a large subunit and a small subunit.

The catalysed reaction is DNA(n) + a 2'-deoxyribonucleoside 5'-triphosphate = DNA(n+1) + diphosphate. It carries out the reaction Exonucleolytic cleavage in the 3'- to 5'-direction to yield nucleoside 5'-phosphates.. Its function is as follows. Possesses two activities: a DNA synthesis (polymerase) and an exonucleolytic activity that degrades single-stranded DNA in the 3'- to 5'-direction. Has a template-primer preference which is characteristic of a replicative DNA polymerase. In Methanococcus maripaludis (strain C7 / ATCC BAA-1331), this protein is DNA polymerase II large subunit.